The primary structure comprises 464 residues: Chitotriosidase-1 (464 aa).

The signal sequence occupies residues 1-21 (MVQSLAWAGVMTLLMVQWGSA). A GH18 domain is found at 22–386 (AKLVCYLTNW…RTLRQELNLP (365 aa)). Cys26 and Cys51 are oxidised to a cystine. Residues 70-71 (EH) and 97-100 (GGWT) each bind chitin. Glu140 acts as the Proton donor in catalysis. 210 to 213 (MAYD) lines the chitin pocket. A disulfide bond links Cys307 and Cys368. A disordered region spans residues 385-416 (LPSETPRSPEQIIPEPRPSSMPEQGPSPGLDN). The Chitin-binding type-2 domain maps to 415 to 464 (DNFCQGKADGVYPNPGDESTYYNCGGGRLFQQSCPPGLVFRASCKCCTWS). Residues Cys448 and Cys461 are joined by a disulfide bond.

Belongs to the glycosyl hydrolase 18 family. Chitinase class II subfamily. As to quaternary structure, monomer. As to expression, highly expressed in tongue, stomach, kidney, brain, skin, testis, and bone marrow. Low level of expression was found in lung, heart, spleen, small intestine, and liver. Not detectable in pancreas, salivary gland, large intestine, uterus, or peripheral blood mononuclear cells (PBMC).

It is found in the secreted. Its subcellular location is the lysosome. It carries out the reaction Random endo-hydrolysis of N-acetyl-beta-D-glucosaminide (1-&gt;4)-beta-linkages in chitin and chitodextrins.. Degrades chitin, chitotriose and chitobiose. May participate in the defense against nematodes and other pathogens. This is Chitotriosidase-1 (Chit1) from Mus musculus (Mouse).